A 285-amino-acid polypeptide reads, in one-letter code: Chitinase 4 (285 aa).

The N-terminal stretch at 1–27 (MAAKMATMVALVFGLALLLSAAAPAAA) is a signal peptide. The 35-residue stretch at 28-62 (QNCGCQDGYCCSQWGYCGTTEAYCGQGCQSGPCWG) folds into the Chitin-binding type-1 domain. 7 disulfides stabilise this stretch: Cys30-Cys38, Cys32-Cys44, Cys37-Cys51, Cys55-Cys60, Cys104-Cys153, Cys166-Cys175, and Cys253-Cys285. The active-site Proton donor is Glu148.

The protein belongs to the glycosyl hydrolase 19 family. Chitinase class IV subfamily. In terms of tissue distribution, expressed at low levels in leaves, sheaths and meristems.

It catalyses the reaction Random endo-hydrolysis of N-acetyl-beta-D-glucosaminide (1-&gt;4)-beta-linkages in chitin and chitodextrins.. Hydrolyzes chitin and may function in reproductive organs during embryogenesis and seed maturation. The polypeptide is Chitinase 4 (Cht4) (Oryza sativa subsp. japonica (Rice)).